A 125-amino-acid chain; its full sequence is Protein ApaG (125 aa).

Residues 1-125 form the ApaG domain; sequence MINSPRVCIQ…FRLAVPTLIH (125 aa).

The polypeptide is Protein ApaG (Escherichia coli (strain SE11)).